The chain runs to 159 residues: MHKQVEIFTDGSCLGNPGPGGYGAILRYQQHEKTLSEGFFMTTNNRMELLAAIVALEALKFPCKITLTTDSQYVRQGITKWIHSWKKRQWRKADKSPVLNVDLWKRLDKAIERHEIEWHWVKGHAGHDENERCDELAKAAAQSPTKEDTGYLESQQDKT.

The region spanning 1–142 (MHKQVEIFTD…CDELAKAAAQ (142 aa)) is the RNase H type-1 domain. 4 residues coordinate Mg(2+): D10, E48, D70, and D134. A disordered region spans residues 135–159 (ELAKAAAQSPTKEDTGYLESQQDKT). Over residues 145–159 (TKEDTGYLESQQDKT) the composition is skewed to basic and acidic residues.

This sequence belongs to the RNase H family. In terms of assembly, monomer. The cofactor is Mg(2+).

The protein resides in the cytoplasm. The catalysed reaction is Endonucleolytic cleavage to 5'-phosphomonoester.. Functionally, endonuclease that specifically degrades the RNA of RNA-DNA hybrids. The protein is Ribonuclease H of Proteus mirabilis (strain HI4320).